The chain runs to 544 residues: MDSFSYSSMKSMLIQARGSLNSRLSEFEPLVLLLVPLVSLFLAQIIGSVFGVVHEKGLKACLIGFIMGLLKMIPGVQNYIDAEKQKVVDQLQSGSSSKKKNKTEVLPVKGLGVEVLEKMENEKRNDAIWQGKCSGTVYIGGAESEGHFSLINQACSMFAHTNPLHIDVFQSVVRFESEVVAMTAALLGSKETASGGQICGNMTSGGTESIVLAVKSSRDYMKYKKGITRPEMIIPESGHSAYDKAAQYFKIKLWRVPVDKDFRADVKATRRHINRNTIMIVGSAPGFPHGIIDPIEELGQLALSYGICFHVDLCLGGFVLPFARKLGYQIPPFDFSVQGVTSISVDVHKYGLAPKGTSTVLYRNHEIRKHQFVAVTEWSGGLYVSPTIAGSRPGSLVAGAWAAMMSLGEEGYLQNTSKIMEASKRLEEGVREIHELFVIGKPDMTIVAFGSKALDIFEVNDIMSSKGWHLNALQRPNSIHICITLQHVPVVDDFLRDLREAVETVKANPGPITGGLAPIYGAAGKMPDRGMVNELLVSFMDSQY.

At 1–29 (MDSFSYSSMKSMLIQARGSLNSRLSEFEP) the chain is on the lumenal side. The helical; Signal-anchor for type III membrane protein transmembrane segment at 30–50 (LVLLLVPLVSLFLAQIIGSVF) threads the bilayer. The Cytoplasmic portion of the chain corresponds to 51–544 (GVVHEKGLKA…LLVSFMDSQY (494 aa)). An N6-(pyridoxal phosphate)lysine modification is found at K349.

It belongs to the group II decarboxylase family. Sphingosine-1-phosphate lyase subfamily. Requires pyridoxal 5'-phosphate as cofactor. As to expression, expressed in the peripheral parts of leaves and the bases of trichomes.

Its subcellular location is the endoplasmic reticulum membrane. The catalysed reaction is sphinganine 1-phosphate = hexadecanal + phosphoethanolamine. The protein operates within lipid metabolism; sphingolipid metabolism. In terms of biological role, cleaves phosphorylated sphingoid bases (PSBs), such as sphingosine-1-phosphate, into fatty aldehydes and phosphoethanolamine. May play a minor role in maintenance of sphingolipid metabolism during normal plant development and growth, but be required for maintaining sphingoid long chain bases (LCB) and their phosphorylated derivatives (LCB-P) levels when sphingolipid metabolism is perturbed. May play a role in dehydration stress. The polypeptide is Sphingosine-1-phosphate lyase (DPL1) (Arabidopsis thaliana (Mouse-ear cress)).